The primary structure comprises 69 residues: Small, acid-soluble spore protein I (69 aa).

This sequence belongs to the SspI family.

The protein resides in the spore core. In Shouchella clausii (strain KSM-K16) (Alkalihalobacillus clausii), this protein is Small, acid-soluble spore protein I.